The sequence spans 464 residues: MSLSLWQQCLARLQDELPATEFSMWIRPLQAELSDNTLALYAPNRFVLDWVRDKYLNNINGLLNDFCGTDAPLLRFEVGSKPPQMAVLQPASQHASEAPSQAAVARPRPSRPSWDNAPVQPELSYRSNVNPKHNFDNFVEGKSNQLARAAARQVADNPGGAYNPLFLYGGTGLGKTHLLHAVGNGIMARKANAKVVYMHSERFVQDMVKALQNNAIEEFKRYYRSVDALLIDDIQFFANKERSQEEFFHTFNALLEGNQQIILTSDRYPKEINGVEDRLKSRFGWGLTVAIEPPELETRVAILMKKADENAIRLPGEVAFFIAKRLRSNVRELEGALNRVIANANFTGRAITIDFVREALRDLLALQEKLVTIDNIQKTVAEYYKIKVADLLSKRRSRSVARPRQMAMALSKELTNHSLPEIGDAFGGRDHTTVLHACRKIEQLREESHDIKEDFSNLIRTLSS.

The domain I, interacts with DnaA modulators stretch occupies residues 1-82 (MSLSLWQQCL…LLRFEVGSKP (82 aa)). The interval 82–127 (PPQMAVLQPASQHASEAPSQAAVARPRPSRPSWDNAPVQPELSYRS) is domain II. Residues 91–118 (ASQHASEAPSQAAVARPRPSRPSWDNAP) are disordered. Residues 128–344 (NVNPKHNFDN…GALNRVIANA (217 aa)) form a domain III, AAA+ region region. The ATP site is built by Gly-172, Gly-174, Lys-175, and Thr-176. Residues 345-464 (NFTGRAITID…FSNLIRTLSS (120 aa)) form a domain IV, binds dsDNA region.

This sequence belongs to the DnaA family. Oligomerizes as a right-handed, spiral filament on DNA at oriC.

It localises to the cytoplasm. Plays an essential role in the initiation and regulation of chromosomal replication. ATP-DnaA binds to the origin of replication (oriC) to initiate formation of the DNA replication initiation complex once per cell cycle. Binds the DnaA box (a 9 base pair repeat at the origin) and separates the double-stranded (ds)DNA. Forms a right-handed helical filament on oriC DNA; dsDNA binds to the exterior of the filament while single-stranded (ss)DNA is stabiized in the filament's interior. The ATP-DnaA-oriC complex binds and stabilizes one strand of the AT-rich DNA unwinding element (DUE), permitting loading of DNA polymerase. After initiation quickly degrades to an ADP-DnaA complex that is not apt for DNA replication. Binds acidic phospholipids. The sequence is that of Chromosomal replication initiator protein DnaA from Sodalis glossinidius (strain morsitans).